We begin with the raw amino-acid sequence, 135 residues long: Large ribosomal subunit protein bL17 (135 aa).

Belongs to the bacterial ribosomal protein bL17 family. In terms of assembly, part of the 50S ribosomal subunit. Contacts protein L32.

The sequence is that of Large ribosomal subunit protein bL17 from Listeria innocua serovar 6a (strain ATCC BAA-680 / CLIP 11262).